The sequence spans 327 residues: Zinc transport protein ZntB (327 aa).

The Cytoplasmic segment spans residues 1–273; that stretch reads MEAIKGSDVN…ARRTYTMSLM (273 aa). The chain crosses the membrane as a helical span at residues 274 to 294; sequence AMVFLPSTFLTGLFGVNLGGI. At 295-300 the chain is on the periplasmic side; the sequence is PGGGWQ. The helical transmembrane segment at 301-321 threads the bilayer; that stretch reads FGFSIFCILLVVLIGGVALWL. Residues 322 to 327 lie on the Cytoplasmic side of the membrane; that stretch reads YRSKWL.

It belongs to the CorA metal ion transporter (MIT) (TC 1.A.35) family.

The protein localises to the cell inner membrane. It catalyses the reaction Zn(2+)(out) + H(+)(out) = Zn(2+)(in) + H(+)(in). Functionally, zinc transporter. Acts as a Zn(2+):proton symporter, which likely mediates zinc ion uptake. The sequence is that of Zinc transport protein ZntB from Shigella flexneri serotype 5b (strain 8401).